A 513-amino-acid chain; its full sequence is Alanine--glyoxylate aminotransferase 2, mitochondrial (513 aa).

The transit peptide at 1 to 40 (MSLAWRNLQKPFYLETSLRILQMRPSLSLGASRIAVPKLT) directs the protein to the mitochondrion. The residue at position 56 (Lys56) is an N6-acetyllysine. N6-acetyllysine; alternate is present on Lys70. Lys70 carries the post-translational modification N6-succinyllysine; alternate. Position 83 is an N6-acetyllysine (Lys83). Lys261 carries the N6-acetyllysine; alternate modification. Position 261 is an N6-succinyllysine; alternate (Lys261). Lys303 carries the post-translational modification N6-succinyllysine. N6-(pyridoxal phosphate)lysine is present on Lys349. An N6-acetyllysine; alternate mark is found at Lys416 and Lys419. Residues Lys416 and Lys419 each carry the N6-succinyllysine; alternate modification. Lys453 is modified (N6-acetyllysine).

Belongs to the class-III pyridoxal-phosphate-dependent aminotransferase family. As to quaternary structure, homotetramer. The cofactor is pyridoxal 5'-phosphate. In terms of tissue distribution, expressed in the liver and kidney.

It localises to the mitochondrion. It carries out the reaction glyoxylate + L-alanine = glycine + pyruvate. The catalysed reaction is (R)-3-amino-2-methylpropanoate + pyruvate = 2-methyl-3-oxopropanoate + L-alanine. The enzyme catalyses 3-oxopropanoate + L-alanine = beta-alanine + pyruvate. It catalyses the reaction 2-oxobutanoate + L-alanine = (2S)-2-aminobutanoate + pyruvate. It carries out the reaction N(omega),N(omega)-dimethyl-L-arginine + pyruvate = 5-(3,3-dimethylguanidino)-2-oxopentanoate + L-alanine. The catalysed reaction is N(omega),N('omega)-dimethyl-L-arginine + pyruvate = 5-(3,3'-dimethylguanidino)-2-oxopentanoate + L-alanine. The enzyme catalyses N(omega),N(omega)-dimethyl-L-arginine + glyoxylate = 5-(3,3-dimethylguanidino)-2-oxopentanoate + glycine. It catalyses the reaction N(omega),N('omega)-dimethyl-L-arginine + glyoxylate = 5-(3,3'-dimethylguanidino)-2-oxopentanoate + glycine. It carries out the reaction N(omega)-methyl-L-arginine + pyruvate = 5-(3-methylguanidino)-2-oxopentanoate + L-alanine. The catalysed reaction is N(omega)-methyl-L-arginine + glyoxylate = 5-(3-methylguanidino)-2-oxopentanoate + glycine. The enzyme catalyses L-ornithine + pyruvate = 5-amino-2-oxopentanoate + L-alanine. It catalyses the reaction L-ornithine + glyoxylate = 5-amino-2-oxopentanoate + glycine. It carries out the reaction (2S)-2-aminobutanoate + glyoxylate = 2-oxobutanoate + glycine. The catalysed reaction is N(omega),N(omega)-dimethyl-L-arginine + oxaloacetate = 5-(3,3-dimethylguanidino)-2-oxopentanoate + L-aspartate. The enzyme catalyses oxaloacetate + L-alanine = L-aspartate + pyruvate. It catalyses the reaction N(omega),N(omega)-dimethyl-L-arginine + 2-oxobutanoate = 5-(3,3-dimethylguanidino)-2-oxopentanoate + (2S)-2-aminobutanoate. It carries out the reaction 2-oxopentanoate + N(omega),N(omega)-dimethyl-L-arginine = 5-(3,3-dimethylguanidino)-2-oxopentanoate + L-2-aminopentanoate. The catalysed reaction is 2-oxohexanoate + N(omega),N(omega)-dimethyl-L-arginine = L-2-aminohexanoate + 5-(3,3-dimethylguanidino)-2-oxopentanoate. With respect to regulation, (R)-3-amino-2-methylpropionate--pyruvate transaminase and beta-alanine-pyruvate aminotransferase are inhibited by aminooxyacetic acid. Functionally, multifunctional aminotransferase with a broad substrate specificity. Catalyzes the conversion of glyoxylate to glycine using alanine as the amino donor. Catalyzes metabolism of not L- but the D-isomer of D-beta-aminoisobutyric acid to generate 2-methyl-3-oxopropanoate and alanine. Catalyzes the transfer of the amino group from beta-alanine to pyruvate to yield L-alanine and 3-oxopropanoate. Can metabolize NG-monomethyl-L-arginine (NMMA), asymmetric NG,NG-dimethyl-L-arginine (ADMA) and symmetric NG,N'G-dimethyl-L-arginine (SDMA). ADMA is a potent inhibitor of nitric-oxide (NO) synthase, and this activity provides mechanism through which the kidney regulates blood pressure. The polypeptide is Alanine--glyoxylate aminotransferase 2, mitochondrial (Agxt2) (Mus musculus (Mouse)).